A 167-amino-acid polypeptide reads, in one-letter code: Phospholipase A2 heteromtoxin (167 aa).

Ca(2+)-binding residues include tryptophan 38, glycine 40, and glycine 42. 5 disulfides stabilise this stretch: cysteine 39/cysteine 61, cysteine 60/cysteine 99, cysteine 67/cysteine 92, cysteine 90/cysteine 127, and cysteine 132/cysteine 144. The active site involves histidine 64. Aspartate 65 serves as a coordination point for Ca(2+). A propeptide spanning residues 136–140 is cleaved from the precursor; the sequence is GRSAR.

The protein belongs to the phospholipase A2 family. Group III subfamily. As to quaternary structure, heterodimer composed of a large and a small subunits; disulfide-linked. It depends on Ca(2+) as a cofactor. In terms of tissue distribution, expressed by the venom gland.

The protein localises to the secreted. The catalysed reaction is a 1,2-diacyl-sn-glycero-3-phosphocholine + H2O = a 1-acyl-sn-glycero-3-phosphocholine + a fatty acid + H(+). Functionally, phospholipase toxin, which catalyzes the calcium-dependent hydrolysis of the 2-acyl groups in 3-sn-phosphoglycerides. Inhibits both skeletal (RYR1) and cardiac (RYR2) ryanodine receptors (calcium release channels). Probably blocks ryanodine receptors by generating a lipid product. This chain is Phospholipase A2 heteromtoxin, found in Heterometrus laoticus (Thai giant scorpion).